Here is a 606-residue protein sequence, read N- to C-terminus: Sporulation kinase A (606 aa).

Residues Gln-3–Met-73 form the PAS 1 domain. Residues Phe-77–Glu-116 enclose the PAC 1 domain. Residues Tyr-140–Gly-214 form the PAS 2 domain. The 38-residue stretch at Gln-218–Arg-255 folds into the PAC 2 domain. The 71-residue stretch at Ser-265–Lys-335 folds into the PAS 3 domain. Residues Gly-402–Lys-606 form the Histidine kinase domain. The residue at position 405 (His-405) is a Phosphohistidine; by autocatalysis.

The catalysed reaction is ATP + protein L-histidine = ADP + protein N-phospho-L-histidine.. Functionally, phosphorylates the sporulation-regulatory proteins spo0A and spo0F. It also autophosphorylates in the presence of ATP. This is Sporulation kinase A (kinA) from Bacillus subtilis (strain 168).